The sequence spans 406 residues: 2,3-bisphosphoglycerate-independent phosphoglycerate mutase (406 aa).

Residues 156 to 165 show a composition bias toward basic and acidic residues; sequence ITEGDPHKEG. The interval 156-177 is disordered; that stretch reads ITEGDPHKEGVPIPEVKPLDNS.

This sequence belongs to the BPG-independent phosphoglycerate mutase family. A-PGAM subfamily.

It catalyses the reaction (2R)-2-phosphoglycerate = (2R)-3-phosphoglycerate. Its pathway is carbohydrate degradation; glycolysis; pyruvate from D-glyceraldehyde 3-phosphate: step 3/5. Functionally, catalyzes the interconversion of 2-phosphoglycerate and 3-phosphoglycerate. The sequence is that of 2,3-bisphosphoglycerate-independent phosphoglycerate mutase from Methanococcus aeolicus (strain ATCC BAA-1280 / DSM 17508 / OCM 812 / Nankai-3).